Reading from the N-terminus, the 20-residue chain is Unknown protein NF042 from 2D-PAGE (20 aa).

This chain is Unknown protein NF042 from 2D-PAGE, found in Naegleria fowleri (Brain eating amoeba).